The following is a 251-amino-acid chain: Appressoria-specific virulence factor GAS1 (251 aa).

An N-terminal signal peptide occupies residues 1–21 (MSLKSLIAATILAAPLVAGHG). The disordered stretch occupies residues 40–76 (VTSTPRDGTRRDPFQQDSTRFKGQQADTFGETVGGGQ). Polar residues predominate over residues 54–66 (QQDSTRFKGQQAD).

Its subcellular location is the cytoplasm. Its function is as follows. Appressoria-specific virulence factor required for appressorial penetration in host and lesion development. In Pyricularia oryzae (strain 70-15 / ATCC MYA-4617 / FGSC 8958) (Rice blast fungus), this protein is Appressoria-specific virulence factor GAS1.